The sequence spans 926 residues: Serine/threonine-protein kinase pakE (926 aa).

The segment covering serine 36 to proline 55 has biased composition (polar residues). Disordered stretches follow at residues serine 36–leucine 257 and glutamine 546–threonine 576. The segment covering asparagine 56–asparagine 107 has biased composition (low complexity). Residues threonine 108–lysine 117 are compositionally biased toward polar residues. A compositionally biased stretch (low complexity) spans asparagine 134 to serine 173. The segment covering arginine 183–arginine 204 has biased composition (polar residues). A compositionally biased stretch (low complexity) spans proline 215 to asparagine 253. The stretch at leucine 534–asparagine 567 forms a coiled coil. The Protein kinase domain maps to phenylalanine 650–isoleucine 903. ATP is bound by residues leucine 656–valine 664 and lysine 679. The Proton acceptor role is filled by aspartate 771.

Belongs to the protein kinase superfamily. STE Ser/Thr protein kinase family. STE20 subfamily. Mg(2+) serves as cofactor.

The enzyme catalyses L-seryl-[protein] + ATP = O-phospho-L-seryl-[protein] + ADP + H(+). It catalyses the reaction L-threonyl-[protein] + ATP = O-phospho-L-threonyl-[protein] + ADP + H(+). May play a role in responding to changes in chemoattractant levels. This Dictyostelium discoideum (Social amoeba) protein is Serine/threonine-protein kinase pakE.